Consider the following 336-residue polypeptide: Holliday junction branch migration complex subunit RuvB (336 aa).

The interval M1–Y182 is large ATPase domain (RuvB-L). ATP contacts are provided by residues L21, R22, G63, K66, T67, S68, E129 to F131, R172, Y182, and R219. Residue T67 participates in Mg(2+) binding. The segment at S183–G253 is small ATPAse domain (RuvB-S). The segment at E256 to F336 is head domain (RuvB-H). DNA contacts are provided by R310 and R315.

Belongs to the RuvB family. Homohexamer. Forms an RuvA(8)-RuvB(12)-Holliday junction (HJ) complex. HJ DNA is sandwiched between 2 RuvA tetramers; dsDNA enters through RuvA and exits via RuvB. An RuvB hexamer assembles on each DNA strand where it exits the tetramer. Each RuvB hexamer is contacted by two RuvA subunits (via domain III) on 2 adjacent RuvB subunits; this complex drives branch migration. In the full resolvosome a probable DNA-RuvA(4)-RuvB(12)-RuvC(2) complex forms which resolves the HJ.

Its subcellular location is the cytoplasm. It carries out the reaction ATP + H2O = ADP + phosphate + H(+). Its function is as follows. The RuvA-RuvB-RuvC complex processes Holliday junction (HJ) DNA during genetic recombination and DNA repair, while the RuvA-RuvB complex plays an important role in the rescue of blocked DNA replication forks via replication fork reversal (RFR). RuvA specifically binds to HJ cruciform DNA, conferring on it an open structure. The RuvB hexamer acts as an ATP-dependent pump, pulling dsDNA into and through the RuvAB complex. RuvB forms 2 homohexamers on either side of HJ DNA bound by 1 or 2 RuvA tetramers; 4 subunits per hexamer contact DNA at a time. Coordinated motions by a converter formed by DNA-disengaged RuvB subunits stimulates ATP hydrolysis and nucleotide exchange. Immobilization of the converter enables RuvB to convert the ATP-contained energy into a lever motion, pulling 2 nucleotides of DNA out of the RuvA tetramer per ATP hydrolyzed, thus driving DNA branch migration. The RuvB motors rotate together with the DNA substrate, which together with the progressing nucleotide cycle form the mechanistic basis for DNA recombination by continuous HJ branch migration. Branch migration allows RuvC to scan DNA until it finds its consensus sequence, where it cleaves and resolves cruciform DNA. This Helicobacter pylori (strain Shi470) protein is Holliday junction branch migration complex subunit RuvB.